Consider the following 1918-residue polypeptide: Diacylglycerol kinase eta (1918 aa).

A compositionally biased stretch (basic and acidic residues) spans 1–10; the sequence is MAHLKLDTLH. The tract at residues 1 to 37 is disordered; that stretch reads MAHLKLDTLHVQRSPRGSRRSSPSSGRSSACSSGSIS. The span at 20–37 shows a compositional bias: low complexity; sequence RSSPSSGRSSACSSGSIS. Residues 82-175 enclose the PH domain; the sequence is AIIKEGFLLK…WLGGLKTATA (94 aa). Phorbol-ester/DAG-type zinc fingers lie at residues 195 to 245 and 268 to 319; these read HHHW…IANC and PHQW…AVAC. Residues 350-486 form the DAGKc domain; it reads GNFSPLLVFV…DRWSIMVFEK (137 aa). 4 disordered regions span residues 783 to 805, 1017 to 1067, 1177 to 1212, and 1380 to 1399; these read GANIDDAGNRLSPCSDGGENTPT, TTLC…DDNP, PNTILTTSTSPTKKSGHGQDISVVVRPPTPLRGDSI, and ERDKEERGGKDKDKTPTEEA. Positions 1177–1189 are enriched in polar residues; that stretch reads PNTILTTSTSPTK. The 64-residue stretch at 1855–1918 folds into the SAM domain; the sequence is WSVNEVVTWL…LQAIKDLSEN (64 aa).

Belongs to the eukaryotic diacylglycerol kinase family.

It is found in the cytoplasm. It carries out the reaction a 1,2-diacyl-sn-glycerol + ATP = a 1,2-diacyl-sn-glycero-3-phosphate + ADP + H(+). Its function is as follows. Phosphorylates diacylglycerol (DAG) to generate phosphatidic acid (PA). In Drosophila erecta (Fruit fly), this protein is Diacylglycerol kinase eta.